The sequence spans 92 residues: UPF0250 protein Rmag_0541 (92 aa).

Belongs to the UPF0250 family.

In Ruthia magnifica subsp. Calyptogena magnifica, this protein is UPF0250 protein Rmag_0541.